The sequence spans 342 residues: MDVLKSEILRKRQLVEDRNLLVENKKYFKRSELAKKEEEAYFERCGYKIQPKDEDQKPLTSSNPVLELELAEEKLPMTLSRQEVIRRLRERGEPIRLFGETDYDAFQRLRKIEILTPEVNKGLRNDLKAALDKIDQQYLNELVGGQEPGEEDTQNDLKVHEENTTIEELEALGESLGKGDDHKDMDIITKFLKFLLGVWAKELNAREDYVKRSVQGKLNSATQKQTESYLRPLFRKLRKRNLPADIKESITDIIKFMLQREYVKANDAYLQMAIGNAPWPIGVTMVGIHARTGREKIFSKHVAHVLNDETQRKYIQGLKRLMTICQKHFPTDPSKCVEYNAL.

N-acetylmethionine is present on methionine 1.

The protein belongs to the PRP18 family. Heterodimer with PPIH. Interacts with PRPF4 and with the spliceosome. Part of a complex containing U4/U6 snRNPs.

It localises to the nucleus speckle. Functionally, participates in the second step of pre-mRNA splicing. The polypeptide is Pre-mRNA-splicing factor 18 (PRPF18) (Bos taurus (Bovine)).